The chain runs to 402 residues: MADAAAPDAASVRNFTINFGPQHPAAHGVLRLVLELDGEVVERVDPHIGLLHRGTEKLIEQKTYLQAIPYFDRLDYVAPMNQEHAFCLAVEKLLGIAVPRRAQLIRVLYAEIGRILSHLLNVTTQAMDVGALTPPLWGFEEREKLMMFYERASGSRMHAAYFRVGGVHQDLPPKLVDDIDAWCDAFPAVVNDLDRLLSDNRIFKQRNVDIGVVTLDQAWSWGFSGVMVRGSGAAWDLRKSQPYECYAELDFEVPIGKNGDCYDRYHIRMEEMRQSVRIMKQCIAKLRAPDGQGPVVVDDHKIFPPRRGEMKRSMEALIHHFKLYTEGFHVPAGEVYVAVEAPKGEFGVYLVSDGSNKPYKCKIRAPGFAHLQAMDFLSRGHLLADVSAILGSLDIVFGEVDR.

It belongs to the complex I 49 kDa subunit family. In terms of assembly, NDH-1 is composed of 14 different subunits. Subunits NuoB, C, D, E, F, and G constitute the peripheral sector of the complex.

The protein localises to the cell inner membrane. It catalyses the reaction a quinone + NADH + 5 H(+)(in) = a quinol + NAD(+) + 4 H(+)(out). Functionally, NDH-1 shuttles electrons from NADH, via FMN and iron-sulfur (Fe-S) centers, to quinones in the respiratory chain. The immediate electron acceptor for the enzyme in this species is believed to be ubiquinone. Couples the redox reaction to proton translocation (for every two electrons transferred, four hydrogen ions are translocated across the cytoplasmic membrane), and thus conserves the redox energy in a proton gradient. The protein is NADH-quinone oxidoreductase subunit D of Rhodopseudomonas palustris (strain TIE-1).